A 510-amino-acid polypeptide reads, in one-letter code: E3 ubiquitin-protein ligase TRIM7 (510 aa).

Residues 29–81 form an RING-type zinc finger; the sequence is CSICLEFFREPVSVECGHSFCRACIMRCWERPGAGTGTATRTLPCPLPCPQCR. S106 bears the Phosphoserine; by RPS6KA5 mark. Residues 124 to 165 form a B box-type zinc finger; that stretch reads AAAARCSQHGEQLKLYCQDDGRAICVVCDRAREHRSHAVLPL. The Zn(2+) site is built by C129, H132, C151, and H157. The stretch at 165 to 275 forms a coiled coil; sequence LEEAVQEAKE…SGQIQETAQK (111 aa). Residues 323–510 form the B30.2/SPRY domain; it reads LLKKFKEDLQ…STGTYLRIWP (188 aa).

This sequence belongs to the TRIM/RBCC family. Forms homodimers. Interacts with GNIP2. Interacts with GYG1. Interacts with RNF187 (via C-terminus). In terms of processing, phosphorylated at Ser-106 by RPS6KA5/MSK1, which stimulates the ubiquitin ligase activity. Post-translationally, auto-ubiquitinates via 'Lys-63'-linked polyubiquitination. As to expression, highly expressed in antigen-presenting cells.

The protein localises to the nucleus. Its subcellular location is the cytoplasm. It localises to the golgi apparatus. It catalyses the reaction S-ubiquitinyl-[E2 ubiquitin-conjugating enzyme]-L-cysteine + [acceptor protein]-L-lysine = [E2 ubiquitin-conjugating enzyme]-L-cysteine + N(6)-ubiquitinyl-[acceptor protein]-L-lysine.. The protein operates within protein modification; protein ubiquitination. E3 ubiquitin-protein ligase that have both tumor-promoting and tumor-suppressing activities and functions in several biological processes including innate immunity, regulation of ferroptosis as well as cell proliferation and migration. Acts as an antiviral effector against multiple viruses by targeting specific viral proteins for ubiquitination and degradation including norovirus NTPase protein. Mechanistically, recognizes the C-terminal glutamine-containing motif generated by viral proteases that process the polyproteins and trigger their ubiquitination and subsequent degradation. Mediates 'Lys-63'-linked polyubiquitination and stabilization of the JUN coactivator RNF187 in response to growth factor signaling via the MEK/ERK pathway, thereby regulating JUN transactivation and cellular proliferation. Promotes the TLR4-mediated signaling activation through its E3 ligase domain leading to production of pro-inflammatory cytokines and type I interferon. Also plays a negative role in the regulation of exogenous cytosolic DNA virus-triggered immune response. Mechanistically, enhances the 'Lys-48'-linked ubiquitination of STING1 leading to its proteasome-dependent degradation. Mediates the ubiquitination of the SIN3-HDAC chromatin remodeling complex component BRMS1. Modulates NCOA4-mediated ferritinophagy and ferroptosis in glioblastoma cells by ubiquitinating NCOA4, leading to its degradation. This chain is E3 ubiquitin-protein ligase TRIM7 (Trim7), found in Mus musculus (Mouse).